The following is a 518-amino-acid chain: Nuclear receptor ROR-gamma (518 aa).

The interval 1–30 (MDRAPQRQHQASRELLAAKKTHTSQIEVIP) is modulating. NR C4-type zinc fingers lie at residues 31–51 (CKICGDKSSGIHYGVITCEGC) and 67–91 (CTRQQNCPIDRTSRNRCQHCRLQKC). Positions 31–96 (CKICGDKSSG…RLQKCLALGM (66 aa)) form a DNA-binding region, nuclear receptor. Disordered regions lie at residues 105–183 (RMSK…SGSG) and 238–258 (HPGLGELGQGPDSYGSPSFRS). Residues 109–118 (KQRDSLHAEV) are compositionally biased toward basic and acidic residues. A compositionally biased stretch (low complexity) spans 119–130 (QKQLQQRQQQQQ). Residues 269-508 (EIEHLVQSVC…PPLYKELFST (240 aa)) enclose the NR LBD domain. Residues 501–506 (LYKELF) carry the AF-2 motif.

Belongs to the nuclear hormone receptor family. NR1 subfamily. In terms of assembly, interacts (via AF-2 motif) with the coactivators NCOA1, NCOA2 and PPARGC1A (via LXXLL motif). Interacts with the corepressor NCOR1. Interacts with CRY1. Interacts (via AF-2 motif) with PROX1. Interacts with FOXP3. Interacts with NR0B2.

Its subcellular location is the nucleus. In terms of biological role, nuclear receptor that binds DNA as a monomer to ROR response elements (RORE) containing a single core motif half-site 5'-AGGTCA-3' preceded by a short A-T-rich sequence. Key regulator of cellular differentiation, immunity, peripheral circadian rhythm as well as lipid, steroid, xenobiotics and glucose metabolism. Considered to have intrinsic transcriptional activity, have some natural ligands like oxysterols that act as agonists (25-hydroxycholesterol) or inverse agonists (7-oxygenated sterols), enhancing or repressing the transcriptional activity, respectively. Recruits distinct combinations of cofactors to target gene regulatory regions to modulate their transcriptional expression, depending on the tissue, time and promoter contexts. Regulates the circadian expression of clock genes such as CRY1, BMAL1 and NR1D1 in peripheral tissues and in a tissue-selective manner. Competes with NR1D1 for binding to their shared DNA response element on some clock genes such as BMAL1, CRY1 and NR1D1 itself, resulting in NR1D1-mediated repression or RORC-mediated activation of the expression, leading to the circadian pattern of clock genes expression. Therefore influences the period length and stability of the clock. Involved in the regulation of the rhythmic expression of genes involved in glucose and lipid metabolism, including PLIN2 and AVPR1A. Negative regulator of adipocyte differentiation through the regulation of early phase genes expression, such as MMP3. Controls adipogenesis as well as adipocyte size and modulates insulin sensitivity in obesity. In liver, has specific and redundant functions with RORA as positive or negative modulator of expression of genes encoding phase I and Phase II proteins involved in the metabolism of lipids, steroids and xenobiotics, such as SULT1E1. Also plays a role in the regulation of hepatocyte glucose metabolism through the regulation of G6PC1 and PCK1. Essential for thymopoiesis and the development of several secondary lymphoid tissues, including lymph nodes and Peyer's patches. Required for the generation of LTi (lymphoid tissue inducer) cells. Regulates thymocyte survival through DNA-binding on ROREs of target gene promoter regions and recruitment of coactivaros via the AF-2. Also plays a key role, downstream of IL6 and TGFB and synergistically with RORA, for lineage specification of uncommitted CD4(+) T-helper (T(H)) cells into T(H)17 cells, antagonizing the T(H)1 program. Probably regulates IL17 and IL17F expression on T(H) by binding to the essential enhancer conserved non-coding sequence 2 (CNS2) in the IL17-IL17F locus. May also play a role in the pre-TCR activation cascade leading to the maturation of alpha/beta T-cells and may participate in the regulation of DNA accessibility in the TCR-J(alpha) locus. Regulates the rhythmic expression of PROX1 and promotes its nuclear localization. Plays an indispensable role in the induction of IFN-gamma dependent anti-mycobacterial systemic immunity. The chain is Nuclear receptor ROR-gamma (RORC) from Pongo abelii (Sumatran orangutan).